The following is a 594-amino-acid chain: Nucleolar protein 56 (594 aa).

Glycyl lysine isopeptide (Lys-Gly) (interchain with G-Cter in SUMO2) cross-links involve residues lysine 87, lysine 230, and lysine 240. The region spanning 292 to 410 is the Nop domain; sequence VAPSLSALIG…VEERLSFYET (119 aa). At serine 314 the chain carries Phosphoserine. Arginine 359 carries the post-translational modification Omega-N-methylarginine. Low complexity-rich tracts occupy residues 458–469 and 488–504; these read ALASSENSSSTP and QEVPQENGMEDPSISFS. Positions 458–594 are disordered; it reads ALASSENSSS…KKFHKASQED (137 aa). Phosphoserine is present on residues serine 466 and serine 467. Threonine 468 bears the Phosphothreonine mark. Residues serine 511, serine 519, serine 520, and serine 537 each carry the phosphoserine modification. Lysine 540 is covalently cross-linked (Glycyl lysine isopeptide (Lys-Gly) (interchain with G-Cter in SUMO2)). At lysine 561 the chain carries N6-acetyllysine. Position 563 is a phosphoserine (serine 563). Lysine 564 is covalently cross-linked (Glycyl lysine isopeptide (Lys-Gly) (interchain with G-Cter in SUMO2)). A phosphoserine mark is found at serine 569, serine 570, serine 579, and serine 581. Over residues 580–594 the composition is skewed to basic residues; it reads SSKKKKKFHKASQED.

This sequence belongs to the NOP5/NOP56 family. In terms of assembly, part of a large pre-ribosomal ribonucleoprotein (RNP) complex, that consists of at least 62 ribosomal proteins, 45 nonribosomal proteins and both pre-rRNA and mature rRNA species. Within this complex directly interacts with TCOF1 in an RNA-independent manner. Core component of box C/D small nucleolar ribonucleoprotein (snoRNP) particles; the core proteins SNU13, NOP56, NOP58 and FBL or FBLL1 assemble stepwise onto the snoRNA. Interacts with NOP1 and NOP58. Interacts with NUFIP1, RUVBL1 and RUVBL2; RUVBL1:RUVBL2 seem to bridge the association of NOP56 with NUFIP1. Part of the small subunit (SSU) processome, composed of more than 70 proteins and the RNA chaperone small nucleolar RNA (snoRNA) U3. Interacts with NOP2 and FBL.

The protein resides in the nucleus. It is found in the nucleolus. The protein localises to the cytoplasm. It localises to the nucleoplasm. Functionally, involved in the early to middle stages of 60S ribosomal subunit biogenesis. Required for the biogenesis of box C/D snoRNAs such U3, U8 and U14 snoRNAs. Part of the small subunit (SSU) processome, first precursor of the small eukaryotic ribosomal subunit. During the assembly of the SSU processome in the nucleolus, many ribosome biogenesis factors, an RNA chaperone and ribosomal proteins associate with the nascent pre-rRNA and work in concert to generate RNA folding, modifications, rearrangements and cleavage as well as targeted degradation of pre-ribosomal RNA by the RNA exosome. Core component of box C/D small nucleolar ribonucleoprotein (snoRNP) complexes that function in methylation of multiple sites on ribosomal RNAs (rRNAs) and messenger RNAs (mRNAs). This is Nucleolar protein 56 from Homo sapiens (Human).